Reading from the N-terminus, the 272-residue chain is Probable ribonuclease HI_0526 (272 aa).

Positions 1–23 are cleaved as a signal peptide; that stretch reads MKKLTSILSLIVLVILAIWQYFT. Catalysis depends on residues H148, E195, and H199.

Belongs to the RNase T2 family.

This is Probable ribonuclease HI_0526 from Haemophilus influenzae (strain ATCC 51907 / DSM 11121 / KW20 / Rd).